A 263-amino-acid polypeptide reads, in one-letter code: Calpain small subunit 1 (263 aa).

Methionine 1 is modified (N-acetylmethionine). Serine 6 carries the phosphoserine modification. The region spanning 91–125 (EEVRQFRRLFAQLAGDDMEVSATELMNILNKVVTR) is the EF-hand 1; atypical domain. 10 residues coordinate Ca(2+): alanine 104, aspartate 107, glutamate 109, glutamate 114, aspartate 132, aspartate 147, aspartate 149, threonine 151, lysine 153, and glutamate 158. 4 consecutive EF-hand domains span residues 134-167 (FGID…NNIK), 164-199 (NNIK…AGFR), 200-228 (LNEH…ISCL), and 229-263 (VRLD…TMYS). The residue at position 174 (lysine 174) is an N6-acetyllysine. Residues aspartate 177, aspartate 179, serine 181, threonine 183, glutamate 188, and aspartate 220 each contribute to the Ca(2+) site.

As to quaternary structure, homodimer or heterodimer of a large (catalytic) and a small (regulatory) subunit. In presence of calcium, the heterodimer dissociates.

The protein localises to the cytoplasm. It localises to the cell membrane. Its function is as follows. Regulatory subunit of the calcium-regulated non-lysosomal thiol-protease which catalyzes limited proteolysis of substrates involved in cytoskeletal remodeling and signal transduction. Essential for embryonic development. The protein is Calpain small subunit 1 (CAPNS1) of Bos taurus (Bovine).